The primary structure comprises 474 residues: Catalase (474 aa).

Active-site residues include His-52 and Asn-124. Tyr-334 is a binding site for heme.

The protein belongs to the catalase family. The cofactor is heme.

It carries out the reaction 2 H2O2 = O2 + 2 H2O. Functionally, decomposes hydrogen peroxide into water and oxygen; serves to protect cells from the toxic effects of hydrogen peroxide. This chain is Catalase (katA), found in Campylobacter jejuni subsp. jejuni serotype O:2 (strain ATCC 700819 / NCTC 11168).